Here is a 162-residue protein sequence, read N- to C-terminus: NADH-quinone oxidoreductase subunit I (162 aa).

2 consecutive 4Fe-4S ferredoxin-type domains span residues 52–82 and 93–122; these read LRRY…IEAG and TRYD…EGPN. Residues C62, C65, C68, C72, C102, C105, C108, and C112 each coordinate [4Fe-4S] cluster.

This sequence belongs to the complex I 23 kDa subunit family. In terms of assembly, NDH-1 is composed of 14 different subunits. Subunits NuoA, H, J, K, L, M, N constitute the membrane sector of the complex. [4Fe-4S] cluster is required as a cofactor.

It localises to the cell inner membrane. The enzyme catalyses a quinone + NADH + 5 H(+)(in) = a quinol + NAD(+) + 4 H(+)(out). NDH-1 shuttles electrons from NADH, via FMN and iron-sulfur (Fe-S) centers, to quinones in the respiratory chain. The immediate electron acceptor for the enzyme in this species is believed to be ubiquinone. Couples the redox reaction to proton translocation (for every two electrons transferred, four hydrogen ions are translocated across the cytoplasmic membrane), and thus conserves the redox energy in a proton gradient. This Methylobacterium radiotolerans (strain ATCC 27329 / DSM 1819 / JCM 2831 / NBRC 15690 / NCIMB 10815 / 0-1) protein is NADH-quinone oxidoreductase subunit I.